We begin with the raw amino-acid sequence, 44 residues long: Large ribosomal subunit protein bL34 (44 aa).

The segment at 1-26 (MQRTLGGTNRKRKRTSGFRARMRTPD) is disordered. A compositionally biased stretch (basic residues) spans 9 to 22 (NRKRKRTSGFRARM).

Belongs to the bacterial ribosomal protein bL34 family.

The chain is Large ribosomal subunit protein bL34 from Trichormus variabilis (strain ATCC 29413 / PCC 7937) (Anabaena variabilis).